The primary structure comprises 205 residues: Large ribosomal subunit protein uL3 (205 aa).

Residues 126 to 150 (GGPKTHGQSDRHRAPGSIGSTTTPG) form a disordered region.

It belongs to the universal ribosomal protein uL3 family. As to quaternary structure, part of the 50S ribosomal subunit. Forms a cluster with proteins L14 and L19.

Its function is as follows. One of the primary rRNA binding proteins, it binds directly near the 3'-end of the 23S rRNA, where it nucleates assembly of the 50S subunit. The protein is Large ribosomal subunit protein uL3 of Dehalococcoides mccartyi (strain ATCC BAA-2100 / JCM 16839 / KCTC 5957 / BAV1).